The primary structure comprises 363 residues: Translocating chain-associated membrane protein 1-like 1 (363 aa).

Over 1–29 (MGLRKKNARNPPVLSHEFMVQNHADMVSC) the chain is Cytoplasmic. A helical membrane pass occupies residues 30–50 (VGMFFVLGLMFEGTSEMSIAF). Residues 51–80 (LTLQHGVVVPAEGLPSGSRTLYHYGVKDLA) are Lumenal-facing. A helical membrane pass occupies residues 81 to 101 (TVFFYMLVAIIIHATIQEYVL). The Cytoplasmic segment spans residues 102–120 (DKLSRRLQLTKGKQNKLNE). The region spanning 116-324 (NKLNEAGQLS…TVWLQRWLED (209 aa)) is the TLC domain. The helical transmembrane segment at 121–141 (AGQLSVFYIVSGIWGMIILAS) threads the bilayer. At 142–159 (ENCLSDPTLLWKSQPHNM) the chain is on the lumenal side. Residues 160–179 (MTFQMKFFYISQLAYWFHSF) form a helical membrane-spanning segment. At 180 to 191 (PELYFQKVRKQD) the chain is on the cytoplasmic side. The chain crosses the membrane as a helical span at residues 192-214 (IPGQLIYIGLHLFHIGGAYLLYL). The Lumenal portion of the chain corresponds to 215–218 (NHLG). The chain crosses the membrane as a helical span at residues 219-241 (LLLLMLHYAVELLSSVCSLLYFG). Residues 242-250 (DERYQKGLS) are Cytoplasmic-facing. Residues 251–271 (LWPIVFISGRLVTLIVSVVTV) traverse the membrane as a helical segment. Residues 272-295 (GLHLAGTNRNGNALSGNVNVLAAK) lie on the Lumenal side of the membrane. A helical membrane pass occupies residues 296–316 (IAVLSSSCSIQVYITWTLTTV). At 317–363 (WLQRWLEDANLHVCGRKRRSRARKGTENGVENPNRIDSPPKKKEKAP) the chain is on the cytoplasmic side. The disordered stretch occupies residues 338-363 (ARKGTENGVENPNRIDSPPKKKEKAP). A compositionally biased stretch (basic and acidic residues) spans 354–363 (SPPKKKEKAP).

This sequence belongs to the TRAM family.

Its subcellular location is the endoplasmic reticulum membrane. Stimulatory or required for the translocation of secretory proteins across the ER membrane. This Mus musculus (Mouse) protein is Translocating chain-associated membrane protein 1-like 1 (Tram1l1).